The sequence spans 424 residues: L-glutamine:2-deoxy-scyllo-inosose aminotransferase (424 aa).

At lysine 202 the chain carries N6-(pyridoxal phosphate)lysine.

The protein belongs to the DegT/DnrJ/EryC1 family. L-glutamine:2-deoxy-scyllo-inosose/scyllo-inosose aminotransferase subfamily. Pyridoxal 5'-phosphate serves as cofactor.

It carries out the reaction 2-deoxy-L-scyllo-inosose + L-glutamine = 2-deoxy-scyllo-inosamine + 2-oxoglutaramate. The catalysed reaction is 3-amino-2,3-dideoxy-scyllo-inosose + L-glutamine = 2-deoxystreptamine + 2-oxoglutaramate. It participates in metabolic intermediate biosynthesis; 2-deoxystreptamine biosynthesis; 2-deoxystreptamine from D-glucose 6-phosphate: step 2/4. It functions in the pathway antibiotic biosynthesis; lividomycin biosynthesis. Its function is as follows. Catalyzes the PLP-dependent transamination of 2-deoxy-scyllo-inosose (2-DOI) to form 2-deoxy-scyllo-inosamine (2-DOIA) using L-glutamine as the amino donor. Also catalyzes the transamination of 3-amino-2,3-dideoxy-scyllo-inosose (keto-2-DOIA) into 2-deoxystreptamine (2-DOS). In Streptomyces lividus, this protein is L-glutamine:2-deoxy-scyllo-inosose aminotransferase (livS).